A 459-amino-acid polypeptide reads, in one-letter code: tRNA modification GTPase MnmE (459 aa).

Arg-22, Glu-85, and Arg-124 together coordinate (6S)-5-formyl-5,6,7,8-tetrahydrofolate. Positions 221–380 constitute a TrmE-type G domain; it reads GLSTVIVGKP…LEIQIRDLFF (160 aa). Residue Asn-231 coordinates K(+). Residues 231-236, 250-256, and 275-278 contribute to the GTP site; these read NVGKSS, TEVAGTT, and DTAG. Residue Ser-235 participates in Mg(2+) binding. The K(+) site is built by Thr-250, Val-252, and Thr-255. Thr-256 provides a ligand contact to Mg(2+). Lys-459 is a binding site for (6S)-5-formyl-5,6,7,8-tetrahydrofolate.

Belongs to the TRAFAC class TrmE-Era-EngA-EngB-Septin-like GTPase superfamily. TrmE GTPase family. As to quaternary structure, homodimer. Heterotetramer of two MnmE and two MnmG subunits. K(+) is required as a cofactor.

Its subcellular location is the cytoplasm. Functionally, exhibits a very high intrinsic GTPase hydrolysis rate. Involved in the addition of a carboxymethylaminomethyl (cmnm) group at the wobble position (U34) of certain tRNAs, forming tRNA-cmnm(5)s(2)U34. The chain is tRNA modification GTPase MnmE from Staphylococcus aureus (strain Mu3 / ATCC 700698).